Here is an 860-residue protein sequence, read N- to C-terminus: DNA mismatch repair protein MutS (860 aa).

An ATP-binding site is contributed by 621 to 628 (GPNMGGKS).

Belongs to the DNA mismatch repair MutS family.

Functionally, this protein is involved in the repair of mismatches in DNA. It is possible that it carries out the mismatch recognition step. This protein has a weak ATPase activity. This Salmonella arizonae (strain ATCC BAA-731 / CDC346-86 / RSK2980) protein is DNA mismatch repair protein MutS.